The sequence spans 242 residues: Segregation and condensation protein A (242 aa).

The protein belongs to the ScpA family. As to quaternary structure, component of a cohesin-like complex composed of ScpA, ScpB and the Smc homodimer, in which ScpA and ScpB bind to the head domain of Smc. The presence of the three proteins is required for the association of the complex with DNA.

The protein localises to the cytoplasm. Functionally, participates in chromosomal partition during cell division. May act via the formation of a condensin-like complex containing Smc and ScpB that pull DNA away from mid-cell into both cell halves. This chain is Segregation and condensation protein A, found in Lactococcus lactis subsp. cremoris (strain SK11).